Consider the following 123-residue polypeptide: Small ribosomal subunit protein uS12 (123 aa).

The tract at residues 1–32 (MPTIQQLVRKGRTDKISKNKTPALKGSPQRRG) is disordered. Aspartate 89 is modified (3-methylthioaspartic acid). Residues 103-123 (DTQGVKGRKQARSRYGAKKEK) are disordered. Residues 108-123 (KGRKQARSRYGAKKEK) show a composition bias toward basic residues.

The protein belongs to the universal ribosomal protein uS12 family. In terms of assembly, part of the 30S ribosomal subunit. Contacts proteins S8 and S17. May interact with IF1 in the 30S initiation complex.

Its function is as follows. With S4 and S5 plays an important role in translational accuracy. Functionally, interacts with and stabilizes bases of the 16S rRNA that are involved in tRNA selection in the A site and with the mRNA backbone. Located at the interface of the 30S and 50S subunits, it traverses the body of the 30S subunit contacting proteins on the other side and probably holding the rRNA structure together. The combined cluster of proteins S8, S12 and S17 appears to hold together the shoulder and platform of the 30S subunit. The protein is Small ribosomal subunit protein uS12 of Cutibacterium acnes (strain DSM 16379 / KPA171202) (Propionibacterium acnes).